Here is a 501-residue protein sequence, read N- to C-terminus: Phenylalanine--tRNA ligase alpha subunit (501 aa).

L-phenylalanine contacts are provided by residues T344, 383-385, and F424; that span reads QID. E426 serves as a coordination point for Mg(2+). F449 provides a ligand contact to L-phenylalanine.

The protein belongs to the class-II aminoacyl-tRNA synthetase family. Phe-tRNA synthetase alpha subunit type 2 subfamily. In terms of assembly, tetramer of two alpha and two beta subunits. Mg(2+) is required as a cofactor.

Its subcellular location is the cytoplasm. The enzyme catalyses tRNA(Phe) + L-phenylalanine + ATP = L-phenylalanyl-tRNA(Phe) + AMP + diphosphate + H(+). This chain is Phenylalanine--tRNA ligase alpha subunit, found in Thermococcus kodakarensis (strain ATCC BAA-918 / JCM 12380 / KOD1) (Pyrococcus kodakaraensis (strain KOD1)).